Consider the following 212-residue polypeptide: Uridine kinase (212 aa).

Residue 13–20 participates in ATP binding; sequence GASASGKS.

This sequence belongs to the uridine kinase family.

It is found in the cytoplasm. It carries out the reaction uridine + ATP = UMP + ADP + H(+). The catalysed reaction is cytidine + ATP = CMP + ADP + H(+). The protein operates within pyrimidine metabolism; CTP biosynthesis via salvage pathway; CTP from cytidine: step 1/3. Its pathway is pyrimidine metabolism; UMP biosynthesis via salvage pathway; UMP from uridine: step 1/1. The protein is Uridine kinase of Shewanella amazonensis (strain ATCC BAA-1098 / SB2B).